The sequence spans 33 residues: Potassium channel toxin alpha-KTx 10.5 (33 aa).

Cystine bridges form between Cys4/Cys23, Cys9/Cys28, and Cys13/Cys30.

As to expression, expressed by the venom gland.

Its subcellular location is the secreted. Functionally, inhibits less than 5% of human voltage-gated potassium (Kv) channel Kv1.3/KCNA3 currents at 100nM concentration and does not block human Kv1.1/KCNA1 and Kv1.2/KCNA2 currents. The chain is Potassium channel toxin alpha-KTx 10.5 from Centruroides bonito (Scorpion).